The chain runs to 550 residues: Glucose-6-phosphate isomerase (550 aa).

D-glucose 6-phosphate is bound by residues 164–165 (GS), 215–220 (SKTFTT), Gln359, Glu363, and His394. The active-site Proton donor is the Glu363. His394 is a catalytic residue. Phosphothreonine is present on Thr455. Residue Lys516 participates in D-glucose 6-phosphate binding. The active site involves Lys516.

It belongs to the GPI family. Homodimer.

It is found in the cytoplasm. The protein localises to the cytosol. It carries out the reaction alpha-D-glucose 6-phosphate = beta-D-fructose 6-phosphate. Its pathway is carbohydrate degradation; glycolysis; D-glyceraldehyde 3-phosphate and glycerone phosphate from D-glucose: step 2/4. Its function is as follows. In the cytoplasm, catalyzes the conversion of glucose-6-phosphate to fructose-6-phosphate, the second step in glycolysis, and the reverse reaction during gluconeogenesis. The protein is Glucose-6-phosphate isomerase (pgi1) of Schizosaccharomyces pombe (strain 972 / ATCC 24843) (Fission yeast).